Reading from the N-terminus, the 473-residue chain is 7-dehydrocholesterol reductase (473 aa).

The disordered stretch occupies residues 1-20; the sequence is MGERRRANASRGDKKVANGE. Transmembrane regions (helical) follow at residues 36–56, 97–117, 175–195, 264–284, 304–324, and 329–349; these read FSLA…YYFV, IYLA…DILH, WIPL…FALV, VTNS…DFFW, LGWG…LYLV, and ELST…YYIF. NADP(+)-binding positions include Lys-356, Arg-360, Met-393, Trp-398, and 405-406; that span reads NY. The chain crosses the membrane as a helical span at residues 419–439; sequence ACGFDHLLPYFYFIYMTILLV. Residues Asp-445, 449-453, and Tyr-460 contribute to the NADP(+) site; that span reads CSSKY.

This sequence belongs to the ERG4/ERG24 family.

It localises to the endoplasmic reticulum membrane. The catalysed reaction is cholesterol + NADP(+) = 7-dehydrocholesterol + NADPH + H(+). It carries out the reaction 7-dehydrodesmosterol + NADPH + H(+) = desmosterol + NADP(+). Its pathway is steroid biosynthesis; cholesterol biosynthesis. Catalyzes the last step of the cholesterol synthesis pathway, which transforms cholesta-5,7-dien-3beta-ol (7-dehydrocholesterol,7-DHC) into cholesterol by reducing the C7-C8 double bond of its sterol core. Can also metabolize cholesta-5,7,24-trien-3beta-ol (7-dehydrodemosterol, 7-DHD) to desmosterol, which is then metabolized by the Delta(24)-sterol reductase (DHCR24) to cholesterol. Modulates ferroptosis (a form of regulated cell death driven by iron-dependent lipid peroxidation) through the metabolic breakdown of the anti-ferroptotic metabolites 7-DHC and 7-DHD which, when accumulated, divert the propagation of peroxyl radical-mediated damage from phospholipid components to its sterol core, protecting plasma and mitochondrial membranes from phospholipid autoxidation. This is 7-dehydrocholesterol reductase (dhcr7) from Xenopus laevis (African clawed frog).